We begin with the raw amino-acid sequence, 181 residues long: Protein Syd (181 aa).

It belongs to the Syd family.

The protein resides in the cell inner membrane. Interacts with the SecY protein in vivo. May bind preferentially to an uncomplexed state of SecY, thus functioning either as a chelating agent for excess SecY in the cell or as a regulatory factor that negatively controls the translocase function. This is Protein Syd from Escherichia coli O17:K52:H18 (strain UMN026 / ExPEC).